A 316-amino-acid polypeptide reads, in one-letter code: MTNEFHHVTVLLHEAVDMLDIKPDGIYVDATLGGSGHSAYLLSLLGDKGHLYCFDQDQKAIDHAQEQLKPYIDKGQVTFIKDNFRHLKARLLEHGVTEIDGILYDLGVSSPQLDERERGFSYKQDAPLDMRMDSQAALTAYEVVNTYDFNDLVRIFFKYGEDKFSKQIARKIEQARAIKPISTTTELAALIKSAKPAKELKKKGHPAKQIFQAIRIEVNDELGAADASIQRAIELLALDGRISVITFHSLEDRLTKHLFKEASTADAPKGLPFIPDELKPKLELVSRKPILPSQKELMANNRAHSAKLRVARKVRK.

S-adenosyl-L-methionine contacts are provided by residues 35-37 (SGH), D55, F84, D105, and Q112.

The protein belongs to the methyltransferase superfamily. RsmH family.

The protein resides in the cytoplasm. It carries out the reaction cytidine(1402) in 16S rRNA + S-adenosyl-L-methionine = N(4)-methylcytidine(1402) in 16S rRNA + S-adenosyl-L-homocysteine + H(+). Its function is as follows. Specifically methylates the N4 position of cytidine in position 1402 (C1402) of 16S rRNA. The polypeptide is Ribosomal RNA small subunit methyltransferase H (Streptococcus equi subsp. equi (strain 4047)).